The primary structure comprises 139 residues: uncharacterized protein (139 aa).

The helical transmembrane segment at 22–38 threads the bilayer; the sequence is SVMSVCFMTMSATVLPI.

The protein resides in the membrane. This is an uncharacterized protein from Saccharomyces cerevisiae (strain ATCC 204508 / S288c) (Baker's yeast).